The sequence spans 233 residues: Hydroxyacylglutathione hydrolase (233 aa).

Positions 52, 54, 56, 57, 108, 125, and 163 each coordinate Zn(2+).

It belongs to the metallo-beta-lactamase superfamily. Glyoxalase II family. As to quaternary structure, monomer. The cofactor is Zn(2+).

The catalysed reaction is an S-(2-hydroxyacyl)glutathione + H2O = a 2-hydroxy carboxylate + glutathione + H(+). Its pathway is secondary metabolite metabolism; methylglyoxal degradation; (R)-lactate from methylglyoxal: step 2/2. In terms of biological role, thiolesterase that catalyzes the hydrolysis of S-D-lactoyl-glutathione to form glutathione and D-lactic acid. The polypeptide is Hydroxyacylglutathione hydrolase (Histophilus somni (strain 2336) (Haemophilus somnus)).